The chain runs to 341 residues: L-threonine 3-dehydrogenase (341 aa).

Cysteine 38 serves as a coordination point for Zn(2+). Active-site charge relay system residues include threonine 40 and histidine 43. Positions 63, 64, 93, 96, 99, and 107 each coordinate Zn(2+). NAD(+) contacts are provided by residues isoleucine 175, aspartate 195, arginine 200, 262–264 (LGI), and 286–287 (IY).

It belongs to the zinc-containing alcohol dehydrogenase family. In terms of assembly, homotetramer. It depends on Zn(2+) as a cofactor.

It localises to the cytoplasm. It catalyses the reaction L-threonine + NAD(+) = (2S)-2-amino-3-oxobutanoate + NADH + H(+). Its pathway is amino-acid degradation; L-threonine degradation via oxydo-reductase pathway; glycine from L-threonine: step 1/2. Catalyzes the NAD(+)-dependent oxidation of L-threonine to 2-amino-3-ketobutyrate. In Idiomarina loihiensis (strain ATCC BAA-735 / DSM 15497 / L2-TR), this protein is L-threonine 3-dehydrogenase.